We begin with the raw amino-acid sequence, 150 residues long: Nucleoside diphosphate kinase (150 aa).

ATP contacts are provided by Lys10, Phe58, Arg86, Thr92, Arg103, and Asn113. The Pros-phosphohistidine intermediate role is filled by His116.

Belongs to the NDK family. Requires Mg(2+) as cofactor.

It is found in the cytoplasm. It catalyses the reaction a 2'-deoxyribonucleoside 5'-diphosphate + ATP = a 2'-deoxyribonucleoside 5'-triphosphate + ADP. The enzyme catalyses a ribonucleoside 5'-diphosphate + ATP = a ribonucleoside 5'-triphosphate + ADP. Its function is as follows. Major role in the synthesis of nucleoside triphosphates other than ATP. The ATP gamma phosphate is transferred to the NDP beta phosphate via a ping-pong mechanism, using a phosphorylated active-site intermediate. The polypeptide is Nucleoside diphosphate kinase (Methanobrevibacter smithii (strain ATCC 35061 / DSM 861 / OCM 144 / PS)).